A 200-amino-acid polypeptide reads, in one-letter code: Holliday junction branch migration complex subunit RuvA (200 aa).

A domain I region spans residues 1 to 63 (MIASVRGVVT…EDSLTLYGFA (63 aa)). The domain II stretch occupies residues 64–142 (DDDAKALFEL…PVPVGADSAA (79 aa)). The interval 143–151 (GVTTGAWPE) is flexible linker. The domain III stretch occupies residues 151–200 (EQVRQALVGLGWTAAQADQAVTAVAETVDGAVPPVPVLLRQAIRLLGRTR).

It belongs to the RuvA family. As to quaternary structure, homotetramer. Forms an RuvA(8)-RuvB(12)-Holliday junction (HJ) complex. HJ DNA is sandwiched between 2 RuvA tetramers; dsDNA enters through RuvA and exits via RuvB. An RuvB hexamer assembles on each DNA strand where it exits the tetramer. Each RuvB hexamer is contacted by two RuvA subunits (via domain III) on 2 adjacent RuvB subunits; this complex drives branch migration. In the full resolvosome a probable DNA-RuvA(4)-RuvB(12)-RuvC(2) complex forms which resolves the HJ.

The protein localises to the cytoplasm. The RuvA-RuvB-RuvC complex processes Holliday junction (HJ) DNA during genetic recombination and DNA repair, while the RuvA-RuvB complex plays an important role in the rescue of blocked DNA replication forks via replication fork reversal (RFR). RuvA specifically binds to HJ cruciform DNA, conferring on it an open structure. The RuvB hexamer acts as an ATP-dependent pump, pulling dsDNA into and through the RuvAB complex. HJ branch migration allows RuvC to scan DNA until it finds its consensus sequence, where it cleaves and resolves the cruciform DNA. This chain is Holliday junction branch migration complex subunit RuvA, found in Salinispora tropica (strain ATCC BAA-916 / DSM 44818 / JCM 13857 / NBRC 105044 / CNB-440).